Consider the following 155-residue polypeptide: SsrA-binding protein (155 aa).

It belongs to the SmpB family.

The protein localises to the cytoplasm. Required for rescue of stalled ribosomes mediated by trans-translation. Binds to transfer-messenger RNA (tmRNA), required for stable association of tmRNA with ribosomes. tmRNA and SmpB together mimic tRNA shape, replacing the anticodon stem-loop with SmpB. tmRNA is encoded by the ssrA gene; the 2 termini fold to resemble tRNA(Ala) and it encodes a 'tag peptide', a short internal open reading frame. During trans-translation Ala-aminoacylated tmRNA acts like a tRNA, entering the A-site of stalled ribosomes, displacing the stalled mRNA. The ribosome then switches to translate the ORF on the tmRNA; the nascent peptide is terminated with the 'tag peptide' encoded by the tmRNA and targeted for degradation. The ribosome is freed to recommence translation, which seems to be the essential function of trans-translation. This is SsrA-binding protein from Ligilactobacillus salivarius (strain UCC118) (Lactobacillus salivarius).